Here is a 187-residue protein sequence, read N- to C-terminus: Interferon alpha-3 (187 aa).

A signal peptide spans 1–23 (MALPCSFSVALVLLSCHSLCCLA). Disulfide bonds link Cys24/Cys122 and Cys52/Cys160. N-linked (GlcNAc...) asparagine glycans are attached at residues Asn94 and Asn101.

It belongs to the alpha/beta interferon family.

The protein resides in the secreted. Produced by macrophages, IFN-alpha have antiviral activities. Interferon stimulates the production of two enzymes: a protein kinase and an oligoadenylate synthetase. This Canis lupus familiaris (Dog) protein is Interferon alpha-3.